We begin with the raw amino-acid sequence, 145 residues long: Trafficking protein particle complex subunit 1 (145 aa).

Belongs to the TRAPP small subunits family. BET5 subfamily. As to quaternary structure, part of the multisubunit transport protein particle (TRAPP) complex. The heterodimer TRAPPC6B-TRAPPC3 interacts with TRAPPC1 likely providing a core for TRAPP complex formation.

The protein localises to the golgi apparatus. It is found in the cis-Golgi network. The protein resides in the endoplasmic reticulum. Its function is as follows. May play a role in vesicular transport from endoplasmic reticulum to Golgi. In Mus musculus (Mouse), this protein is Trafficking protein particle complex subunit 1.